Consider the following 194-residue polypeptide: PRELI domain containing protein 3B (194 aa).

The PRELI/MSF1 domain occupies 1–172 (MKIWTSEHVF…VIHKLNAEIE (172 aa)). A phosphoserine mark is found at S46 and S51.

This sequence belongs to the slowmo family.

This is PRELI domain containing protein 3B (PRELID3B) from Sus scrofa (Pig).